A 548-amino-acid chain; its full sequence is Chaperonin GroEL (548 aa).

ATP is bound by residues 30–33 (TLGP), Lys-51, 87–91 (DGTTT), Gly-415, and Asp-495.

This sequence belongs to the chaperonin (HSP60) family. Forms a cylinder of 14 subunits composed of two heptameric rings stacked back-to-back. Interacts with the co-chaperonin GroES.

Its subcellular location is the cytoplasm. The catalysed reaction is ATP + H2O + a folded polypeptide = ADP + phosphate + an unfolded polypeptide.. Together with its co-chaperonin GroES, plays an essential role in assisting protein folding. The GroEL-GroES system forms a nano-cage that allows encapsulation of the non-native substrate proteins and provides a physical environment optimized to promote and accelerate protein folding. This chain is Chaperonin GroEL, found in Yersinia pseudotuberculosis serotype O:1b (strain IP 31758).